Here is a 319-residue protein sequence, read N- to C-terminus: Ferrochelatase (319 aa).

Fe cation is bound by residues histidine 193 and glutamate 274.

The protein belongs to the ferrochelatase family.

The protein localises to the cytoplasm. The catalysed reaction is heme b + 2 H(+) = protoporphyrin IX + Fe(2+). The protein operates within porphyrin-containing compound metabolism; protoheme biosynthesis; protoheme from protoporphyrin-IX: step 1/1. Its function is as follows. Catalyzes the ferrous insertion into protoporphyrin IX. The polypeptide is Ferrochelatase (Actinobacillus pleuropneumoniae serotype 7 (strain AP76)).